Here is a 446-residue protein sequence, read N- to C-terminus: Argininosuccinate lyase (446 aa).

The protein belongs to the lyase 1 family. Argininosuccinate lyase subfamily.

Its subcellular location is the cytoplasm. It catalyses the reaction 2-(N(omega)-L-arginino)succinate = fumarate + L-arginine. It participates in amino-acid biosynthesis; L-arginine biosynthesis; L-arginine from L-ornithine and carbamoyl phosphate: step 3/3. In Parabacteroides distasonis (strain ATCC 8503 / DSM 20701 / CIP 104284 / JCM 5825 / NCTC 11152), this protein is Argininosuccinate lyase.